The primary structure comprises 399 residues: Succinate--CoA ligase [ADP-forming] subunit beta (399 aa).

In terms of domain architecture, ATP-grasp spans 9–254; the sequence is KELLAKFGVA…ETEEDPAEIE (246 aa). Residues K46, 53 to 55, A112, and E117 contribute to the ATP site; that span reads GRG. 2 residues coordinate Mg(2+): N209 and D223. Substrate-binding positions include N274 and 331–333; that span reads GIM.

This sequence belongs to the succinate/malate CoA ligase beta subunit family. As to quaternary structure, heterotetramer of two alpha and two beta subunits. Mg(2+) serves as cofactor.

It carries out the reaction succinate + ATP + CoA = succinyl-CoA + ADP + phosphate. The enzyme catalyses GTP + succinate + CoA = succinyl-CoA + GDP + phosphate. Its pathway is carbohydrate metabolism; tricarboxylic acid cycle; succinate from succinyl-CoA (ligase route): step 1/1. Its function is as follows. Succinyl-CoA synthetase functions in the citric acid cycle (TCA), coupling the hydrolysis of succinyl-CoA to the synthesis of either ATP or GTP and thus represents the only step of substrate-level phosphorylation in the TCA. The beta subunit provides nucleotide specificity of the enzyme and binds the substrate succinate, while the binding sites for coenzyme A and phosphate are found in the alpha subunit. The sequence is that of Succinate--CoA ligase [ADP-forming] subunit beta from Rhizorhabdus wittichii (strain DSM 6014 / CCUG 31198 / JCM 15750 / NBRC 105917 / EY 4224 / RW1) (Sphingomonas wittichii).